The following is a 160-amino-acid chain: Ribonuclease HI (160 aa).

One can recognise an RNase H type-1 domain in the interval 4 to 147; it reads TPNSVTLYTD…CDRLAVAAYQ (144 aa). Residues Asp13, Glu52, Asp74, and Asp139 each contribute to the Mg(2+) site.

Belongs to the RNase H family. As to quaternary structure, monomer. The cofactor is Mg(2+).

Its subcellular location is the cytoplasm. The catalysed reaction is Endonucleolytic cleavage to 5'-phosphomonoester.. Endonuclease that specifically degrades the RNA of RNA-DNA hybrids. This Synechocystis sp. (strain ATCC 27184 / PCC 6803 / Kazusa) protein is Ribonuclease HI (rnhA).